The following is a 337-amino-acid chain: Glyceraldehyde-3-phosphate dehydrogenase 1, cytosolic (337 aa).

Residues 13-14, D35, and R82 contribute to the NAD(+) site; that span reads RI. Residues 153-155, T184, 213-214, and R236 each bind D-glyceraldehyde 3-phosphate; these read SCT and TG. C154 serves as the catalytic Nucleophile. N318 is a binding site for NAD(+).

This sequence belongs to the glyceraldehyde-3-phosphate dehydrogenase family. Homotetramer.

The protein resides in the cytoplasm. It carries out the reaction D-glyceraldehyde 3-phosphate + phosphate + NAD(+) = (2R)-3-phospho-glyceroyl phosphate + NADH + H(+). The protein operates within carbohydrate degradation; glycolysis; pyruvate from D-glyceraldehyde 3-phosphate: step 1/5. Functionally, key enzyme in glycolysis that catalyzes the first step of the pathway by converting D-glyceraldehyde 3-phosphate (G3P) into 3-phospho-D-glyceroyl phosphate. Essential for the maintenance of cellular ATP levels and carbohydrate metabolism. This chain is Glyceraldehyde-3-phosphate dehydrogenase 1, cytosolic (GAPC), found in Hordeum vulgare (Barley).